Reading from the N-terminus, the 170-residue chain is UPF0201 protein MJ1564 (170 aa).

Acidic residues predominate over residues 133 to 148; the sequence is NEDELEEEEEKEDSEE. The segment at 133-170 is disordered; that stretch reads NEDELEEEEEKEDSEEIKEGHKEENNLKIKVIDNSSGD. Residues 149–163 show a composition bias toward basic and acidic residues; it reads IKEGHKEENNLKIKV.

The protein belongs to the UPF0201 family.

In Methanocaldococcus jannaschii (strain ATCC 43067 / DSM 2661 / JAL-1 / JCM 10045 / NBRC 100440) (Methanococcus jannaschii), this protein is UPF0201 protein MJ1564.